The sequence spans 226 residues: Brachyurin (226 aa).

The Peptidase S1 domain maps to 1–223 (IVGGVEAVPN…FLDWIQTQTG (223 aa)). Cysteine 26 and cysteine 42 are disulfide-bonded. Active-site charge relay system residues include histidine 41 and aspartate 87. Intrachain disulfides connect cysteine 151-cysteine 164 and cysteine 174-cysteine 200. The active-site Charge relay system is the serine 178.

This sequence belongs to the peptidase S1 family.

The catalysed reaction is Hydrolysis of proteins, with broad specificity for peptide bonds. Native collagen is cleaved about 75% of the length of the molecule from the N-terminus. Low activity on small molecule substrates of both trypsin and chymotrypsin.. In terms of biological role, this enzyme is a serine protease capable of degrading the native triple helix of collagen. This is Brachyurin from Leptuca pugilator (Atlantic sand fiddler crab).